The chain runs to 426 residues: uncharacterized protein (426 aa).

This sequence to M.leprae L518_C2_147 and M.tuberculosis Rv1524.

This is an uncharacterized protein from Mycobacterium tuberculosis (strain CDC 1551 / Oshkosh).